The primary structure comprises 310 residues: Malate dehydrogenase (310 aa).

Residues 7–13 (GAAGGIG) and Asp34 contribute to the NAD(+) site. Residues Arg81 and Arg87 each coordinate substrate. NAD(+)-binding positions include Asn94 and 117 to 119 (ITN). Positions 119 and 153 each coordinate substrate. His177 acts as the Proton acceptor in catalysis. Residue Met227 participates in NAD(+) binding.

It belongs to the LDH/MDH superfamily. MDH type 1 family. In terms of assembly, homodimer.

It catalyses the reaction (S)-malate + NAD(+) = oxaloacetate + NADH + H(+). Its function is as follows. Catalyzes the reversible oxidation of malate to oxaloacetate. This chain is Malate dehydrogenase, found in Vibrio vulnificus (strain CMCP6).